The primary structure comprises 246 residues: Dihydromethanopterin reductase (acceptor) (246 aa).

4Fe-4S ferredoxin-type domains are found at residues 150–178 (LPYAIDKKKCKLCLKCINVCPNGAIVKRD) and 179–208 (NFVEILLSKCLGCGNCKKVCPYNAIIEGKE). The [4Fe-4S] cluster site is built by Cys159, Cys162, Cys165, Cys169, Cys188, Cys191, Cys194, and Cys198.

As to quaternary structure, homodimer. It depends on [4Fe-4S] cluster as a cofactor.

It carries out the reaction 5,6,7,8-tetrahydromethanopterin + A = 7,8-dihydromethanopterin + AH2. Its pathway is cofactor biosynthesis; 5,6,7,8-tetrahydromethanopterin biosynthesis. Functionally, involved in the biosynthesis of tetrahydromethanopterin, a coenzyme used in methanogenesis. Catalyzes the reduction of dihydromethanopterin (H(2)MPT) to tetrahydromethanopterin (H(4)MPT). Ferredoxin may serve as an electron donor. The chain is Dihydromethanopterin reductase (acceptor) from Methanocaldococcus jannaschii (strain ATCC 43067 / DSM 2661 / JAL-1 / JCM 10045 / NBRC 100440) (Methanococcus jannaschii).